We begin with the raw amino-acid sequence, 793 residues long: Protein translocase subunit SecA 2 (793 aa).

ATP-binding positions include Q77, 95-99 (GEGKT), and D493.

This sequence belongs to the SecA family. In terms of assembly, monomer and homodimer. Part of the essential Sec protein translocation apparatus which comprises SecA, SecYEG and auxiliary proteins SecDF. Other proteins may also be involved.

The protein resides in the cell membrane. The protein localises to the cytoplasm. The enzyme catalyses ATP + H2O + cellular proteinSide 1 = ADP + phosphate + cellular proteinSide 2.. Functionally, part of the Sec protein translocase complex. Interacts with the SecYEG preprotein conducting channel. Has a central role in coupling the hydrolysis of ATP to the transfer of proteins into and across the cell membrane, serving as an ATP-driven molecular motor driving the stepwise translocation of polypeptide chains across the membrane. The chain is Protein translocase subunit SecA 2 from Streptococcus sanguinis (strain SK36).